The following is a 174-amino-acid chain: Ferritin, heavy subunit (174 aa).

Positions 7–156 constitute a Ferritin-like diiron domain; that stretch reads QNFHKDCEAA…DWVTNLRRLG (150 aa). Fe cation is bound by residues Glu-24, Glu-59, His-62, Glu-104, and Gln-138.

Belongs to the ferritin family. As to quaternary structure, in liver, forms a heteromer consisting of middle and heavy subunits. The functional molecule forms a roughly spherical shell with a diameter of 12 nm and contains a central cavity into which the insoluble mineral iron core is deposited. As to expression, liver (at protein level).

It carries out the reaction 4 Fe(2+) + O2 + 4 H(+) = 4 Fe(3+) + 2 H2O. Functionally, stores iron in a soluble, non-toxic, readily available form. Important for iron homeostasis. Has ferroxidase activity. Iron is taken up in the ferrous form and deposited as ferric hydroxides after oxidation. Also plays a role in delivery of iron to cells. Mediates iron uptake in capsule cells of the developing kidney. Delivery to lysosomes is mediated by the cargo receptor NCOA4 for autophagic degradation and release of iron. The protein is Ferritin, heavy subunit of Trematomus newnesi (Dusky notothen).